The sequence spans 114 residues: Large ribosomal subunit protein uL18 (114 aa).

Belongs to the universal ribosomal protein uL18 family. As to quaternary structure, part of the 50S ribosomal subunit; part of the 5S rRNA/L5/L18/L25 subcomplex. Contacts the 5S and 23S rRNAs.

This is one of the proteins that bind and probably mediate the attachment of the 5S RNA into the large ribosomal subunit, where it forms part of the central protuberance. The sequence is that of Large ribosomal subunit protein uL18 from Porphyromonas gingivalis (strain ATCC BAA-308 / W83).